Reading from the N-terminus, the 607-residue chain is Monocarboxylate transporter 7 (607 aa).

The disordered stretch occupies residues 1-84 (MRASGQGPQR…PAETGCSRSR (84 aa)). At 1–105 (MRASGQGPQR…ANVYTQVPDG (105 aa)) the chain is on the cytoplasmic side. A helical membrane pass occupies residues 106–126 (GWGWAVAVSFFFVEVFTYGII). Topologically, residues 127–146 (KSFGVFFNDLMDSFDESNSK) are extracellular. A helical transmembrane segment spans residues 147–167 (ISWIISICVFVLTFTAPLSTV). The Cytoplasmic portion of the chain corresponds to 168 to 175 (LSNRFGHR). Residues 176–196 (LVVMAGGLLISLGMITASFSQ) form a helical membrane-spanning segment. Topologically, residues 197–202 (RVYHMY) are extracellular. A helical membrane pass occupies residues 203–223 (ISIGVISGLGYCFSFLPTVTI). The Cytoplasmic portion of the chain corresponds to 224–233 (LSQYFDKRRS). A helical membrane pass occupies residues 234 to 254 (VVTAVASTGECFAVFAFAPAI). Residues 255-268 (TALKEHIGWRYSLL) are Extracellular-facing. A helical membrane pass occupies residues 269-289 (FVGLLQLNIMVCGALLRPIII). Topologically, residues 290 to 383 (QGPGQSPKAV…KEKSFICYAL (94 aa)) are cytoplasmic. Ser319, Ser322, Ser325, and Ser332 each carry phosphoserine. A helical membrane pass occupies residues 384-404 (FGLFATLGFFAPSLYIIPLGI). The Extracellular segment spans residues 405–414 (SLGIDPDRAA). A helical transmembrane segment spans residues 415-435 (FLLSTMAIAEVFGRIGAGFVL). Residues 436-442 (NREPIRK) are Cytoplasmic-facing. The helical transmembrane segment at 443–463 (IYIELICVILLTASLFAFTFA) threads the bilayer. The Extracellular portion of the chain corresponds to 464 to 465 (TE). The chain crosses the membrane as a helical span at residues 466–486 (FWGLMLCSVFFGSMVGTIGGT). Topologically, residues 487–507 (HIPMLAEDDVVGIEKMSSAAG) are cytoplasmic. The chain crosses the membrane as a helical span at residues 508–528 (VYVFIQSISGLAGPPLAGLLV). At 529-536 (DQSKIYSR) the chain is on the extracellular side. The chain crosses the membrane as a helical span at residues 537–557 (AFYSCAAGMCLAAVCLALVRP). Residues 558–607 (CKKGLCQNSHSGENQTDRQRGKALQDIPEDFLEMDLGKCEHRAHMKMDPV) lie on the Cytoplasmic side of the membrane.

This sequence belongs to the major facilitator superfamily. Monocarboxylate porter (TC 2.A.1.13) family. As to quaternary structure, forms functional complexes with BSG/CD147 or EMB/GP70 ancillary proteins.

Its subcellular location is the basolateral cell membrane. It catalyses the reaction taurine(out) = taurine(in). In terms of biological role, monocarboxylate transporter selective for taurine. May associate with BSG/CD147 or EMB/GP70 ancillary proteins to mediate facilitative efflux or influx of taurine across the plasma membrane. The transport is pH- and sodium-independent. Rather low-affinity, is likely effective for taurine transport in tissues where taurine is present at high concentrations. In Mus musculus (Mouse), this protein is Monocarboxylate transporter 7.